The sequence spans 277 residues: Formamidopyrimidine-DNA glycosylase (277 aa).

P2 serves as the catalytic Schiff-base intermediate with DNA. E3 functions as the Proton donor in the catalytic mechanism. The active-site Proton donor; for beta-elimination activity is K60. Residues H94, R113, and R158 each coordinate DNA. The segment at 243–277 adopts an FPG-type zinc-finger fold; the sequence is WVYNRAGEPCKVCGDVIQRIKLGGRSSHFCRQCQV. Catalysis depends on R267, which acts as the Proton donor; for delta-elimination activity.

This sequence belongs to the FPG family. Monomer. Requires Zn(2+) as cofactor.

The enzyme catalyses Hydrolysis of DNA containing ring-opened 7-methylguanine residues, releasing 2,6-diamino-4-hydroxy-5-(N-methyl)formamidopyrimidine.. It carries out the reaction 2'-deoxyribonucleotide-(2'-deoxyribose 5'-phosphate)-2'-deoxyribonucleotide-DNA = a 3'-end 2'-deoxyribonucleotide-(2,3-dehydro-2,3-deoxyribose 5'-phosphate)-DNA + a 5'-end 5'-phospho-2'-deoxyribonucleoside-DNA + H(+). In terms of biological role, involved in base excision repair of DNA damaged by oxidation or by mutagenic agents. Acts as a DNA glycosylase that recognizes and removes damaged bases. Has a preference for oxidized purines, such as 7,8-dihydro-8-oxoguanine (8-oxoG). Has AP (apurinic/apyrimidinic) lyase activity and introduces nicks in the DNA strand. Cleaves the DNA backbone by beta-delta elimination to generate a single-strand break at the site of the removed base with both 3'- and 5'-phosphates. The polypeptide is Formamidopyrimidine-DNA glycosylase (Trichormus variabilis (strain ATCC 29413 / PCC 7937) (Anabaena variabilis)).